Here is a 159-residue protein sequence, read N- to C-terminus: Heavy metal-associated isoprenylated plant protein 28 (159 aa).

An HMA domain is found at Leu10 to Glu73. Positions 21 and 24 each coordinate a metal cation. Cys156 carries the post-translational modification Cysteine methyl ester. The S-farnesyl cysteine moiety is linked to residue Cys156. The propeptide at Ser157–Met159 is removed in mature form.

It belongs to the HIPP family.

Its function is as follows. Heavy-metal-binding protein. The protein is Heavy metal-associated isoprenylated plant protein 28 of Arabidopsis thaliana (Mouse-ear cress).